Here is a 420-residue protein sequence, read N- to C-terminus: Gamma-glutamyl phosphate reductase (420 aa).

Belongs to the gamma-glutamyl phosphate reductase family.

It is found in the cytoplasm. It carries out the reaction L-glutamate 5-semialdehyde + phosphate + NADP(+) = L-glutamyl 5-phosphate + NADPH + H(+). The protein operates within amino-acid biosynthesis; L-proline biosynthesis; L-glutamate 5-semialdehyde from L-glutamate: step 2/2. Functionally, catalyzes the NADPH-dependent reduction of L-glutamate 5-phosphate into L-glutamate 5-semialdehyde and phosphate. The product spontaneously undergoes cyclization to form 1-pyrroline-5-carboxylate. The chain is Gamma-glutamyl phosphate reductase from Streptococcus pneumoniae serotype 2 (strain D39 / NCTC 7466).